The primary structure comprises 262 residues: UPF0758 protein R01728 (262 aa).

Positions 23–44 are disordered; that stretch reads PEKRTRNSPATAPAPATDTHYH. Residues 31-40 are compositionally biased toward low complexity; that stretch reads PATAPAPATD. An MPN domain is found at 140-262; sequence VLSSWSAVID…HVSLKGLRLF (123 aa). Residues histidine 211, histidine 213, and aspartate 224 each coordinate Zn(2+). Positions 211-224 match the JAMM motif motif; sequence HNHPSGDPTPSRAD.

It belongs to the UPF0758 family.

In Rhizobium meliloti (strain 1021) (Ensifer meliloti), this protein is UPF0758 protein R01728.